A 639-amino-acid polypeptide reads, in one-letter code: Eukaryotic translation initiation factor 2-alpha kinase 2 (639 aa).

Residues 171–588 (FEEYSLLGRG…LEVLNCGLLL (418 aa)) form the Protein kinase domain. ATP is bound by residues 177-185 (LGRGGFGSV) and lysine 200. A compositionally biased stretch (low complexity) spans 298–320 (ISTSRKSSYSSTTESSNFENLES). Positions 298 to 322 (ISTSRKSSYSSTTESSNFENLESPR) are disordered. Residue aspartate 417 is the Proton acceptor of the active site.

Belongs to the protein kinase superfamily. Ser/Thr protein kinase family. GCN2 subfamily. Post-translationally, autophosphorylated.

The catalysed reaction is L-seryl-[protein] + ATP = O-phospho-L-seryl-[protein] + ADP + H(+). The enzyme catalyses L-threonyl-[protein] + ATP = O-phospho-L-threonyl-[protein] + ADP + H(+). Its function is as follows. Mediates down-regulation of protein synthesis in response to stress conditions by the phosphorylation of the alpha subunit of eIF-2 (tif211) on 'Ser-52'. Protein synthesis is inhibited at the level of initiation. Activity is inhibited in the presence of heme. The chain is Eukaryotic translation initiation factor 2-alpha kinase 2 (hri2) from Schizosaccharomyces pombe (strain 972 / ATCC 24843) (Fission yeast).